A 435-amino-acid polypeptide reads, in one-letter code: Type A flavoprotein fprA (435 aa).

Residues 48–228 (ANGTTYNAYA…PFRSFVAQAL (181 aa)) are zinc metallo-hydrolase. Residues His-98, Glu-100, Asp-102, His-167, Asp-186, and His-243 each contribute to the Fe cation site. Residues 276-415 (LLIFYVSAYG…EGRAFGRRLA (140 aa)) enclose the Flavodoxin-like domain.

It in the N-terminal section; belongs to the zinc metallo-hydrolase group 3 family. As to quaternary structure, homodimer. FMN serves as cofactor. The cofactor is Fe cation.

In terms of biological role, low-potential electron donor to a number of redox enzymes. This Rhodobacter capsulatus (strain ATCC BAA-309 / NBRC 16581 / SB1003) protein is Type A flavoprotein fprA (fprA).